The primary structure comprises 131 residues: Small ribosomal subunit protein uS8 (131 aa).

Belongs to the universal ribosomal protein uS8 family. As to quaternary structure, part of the 30S ribosomal subunit. Contacts proteins S5 and S12.

Its function is as follows. One of the primary rRNA binding proteins, it binds directly to 16S rRNA central domain where it helps coordinate assembly of the platform of the 30S subunit. The polypeptide is Small ribosomal subunit protein uS8 (Campylobacter fetus subsp. fetus (strain 82-40)).